We begin with the raw amino-acid sequence, 145 residues long: UPF0201 protein SSO1042 (145 aa).

It belongs to the UPF0201 family.

The polypeptide is UPF0201 protein SSO1042 (Saccharolobus solfataricus (strain ATCC 35092 / DSM 1617 / JCM 11322 / P2) (Sulfolobus solfataricus)).